The chain runs to 138 residues: Transmembrane protein 170A (138 aa).

The Lumenal portion of the chain corresponds to 1–44 (MEGSEAGGGGLLQQILSLRLVPRVGNGTTYSSPLSTFPEMWYGV). N-linked (GlcNAc...) asparagine glycosylation is present at asparagine 26. Residues 45-65 (FLWALVSSLSFHVPAALLALF) traverse the membrane as a helical segment. At 66–79 (TLRHHKYGRFMSVS) the chain is on the cytoplasmic side. Residues 80–100 (LLLMGIVGPITAGILTSAAIA) form a helical membrane-spanning segment. Residues 101-110 (GVYRAAGKKM) are Lumenal-facing. A helical membrane pass occupies residues 111-131 (IPFEALIFEVGQTFCVVVVSF). Topologically, residues 132–138 (LRILATL) are cytoplasmic.

This sequence belongs to the TMEM170 family.

The protein localises to the endoplasmic reticulum membrane. It is found in the nucleus envelope. Its function is as follows. May regulate membrane morphogenesis in the endoplasmic reticulum (ER) by promoting ER sheet formation at the expense of ER tubules. This Gallus gallus (Chicken) protein is Transmembrane protein 170A (TMEM170A).